Consider the following 228-residue polypeptide: Imidazole glycerol phosphate synthase subunit HisH (228 aa).

The 215-residue stretch at 4 to 218 folds into the Glutamine amidotransferase type-1 domain; that stretch reads DIAVVDYGMG…VTWNPGEHAS (215 aa). Cysteine 83 functions as the Nucleophile in the catalytic mechanism. Active-site residues include histidine 193 and glutamate 195.

As to quaternary structure, heterodimer of HisH and HisF.

The protein resides in the cytoplasm. It catalyses the reaction 5-[(5-phospho-1-deoxy-D-ribulos-1-ylimino)methylamino]-1-(5-phospho-beta-D-ribosyl)imidazole-4-carboxamide + L-glutamine = D-erythro-1-(imidazol-4-yl)glycerol 3-phosphate + 5-amino-1-(5-phospho-beta-D-ribosyl)imidazole-4-carboxamide + L-glutamate + H(+). The catalysed reaction is L-glutamine + H2O = L-glutamate + NH4(+). It participates in amino-acid biosynthesis; L-histidine biosynthesis; L-histidine from 5-phospho-alpha-D-ribose 1-diphosphate: step 5/9. IGPS catalyzes the conversion of PRFAR and glutamine to IGP, AICAR and glutamate. The HisH subunit catalyzes the hydrolysis of glutamine to glutamate and ammonia as part of the synthesis of IGP and AICAR. The resulting ammonia molecule is channeled to the active site of HisF. The sequence is that of Imidazole glycerol phosphate synthase subunit HisH from Thiobacillus denitrificans (strain ATCC 25259 / T1).